The sequence spans 164 residues: MEMTNAQRLILSNQYKMMTMLDPDNAERYRRLQTIVERGFGLQMRELDREFGELKEETCRTVIDIMEMYHALHVSWTNLKDAQTIDERRVTFLGFDVATESRYLSYVRFMVNTEGRYTHFDAGTHGFNSQTPMWEKYQRMLSVWHSCPRQYHLSSNEIQQIINA.

The protein belongs to the UPF0304 family.

The chain is UPF0304 protein Ent638_2838 from Enterobacter sp. (strain 638).